The primary structure comprises 194 residues: Imidazoleglycerol-phosphate dehydratase (194 aa).

The protein belongs to the imidazoleglycerol-phosphate dehydratase family.

It is found in the cytoplasm. It carries out the reaction D-erythro-1-(imidazol-4-yl)glycerol 3-phosphate = 3-(imidazol-4-yl)-2-oxopropyl phosphate + H2O. It participates in amino-acid biosynthesis; L-histidine biosynthesis; L-histidine from 5-phospho-alpha-D-ribose 1-diphosphate: step 6/9. In Streptococcus thermophilus (strain ATCC BAA-491 / LMD-9), this protein is Imidazoleglycerol-phosphate dehydratase.